A 239-amino-acid polypeptide reads, in one-letter code: Methylthioribulose-1-phosphate dehydratase (239 aa).

Substrate is bound at residue Cys-94. Positions 112 and 114 each coordinate Zn(2+). Glu-136 functions as the Proton donor/acceptor in the catalytic mechanism. His-192 contacts Zn(2+).

The protein belongs to the aldolase class II family. MtnB subfamily. Zn(2+) serves as cofactor.

It is found in the cytoplasm. The enzyme catalyses 5-(methylsulfanyl)-D-ribulose 1-phosphate = 5-methylsulfanyl-2,3-dioxopentyl phosphate + H2O. It functions in the pathway amino-acid biosynthesis; L-methionine biosynthesis via salvage pathway; L-methionine from S-methyl-5-thio-alpha-D-ribose 1-phosphate: step 2/6. Functionally, catalyzes the dehydration of methylthioribulose-1-phosphate (MTRu-1-P) into 2,3-diketo-5-methylthiopentyl-1-phosphate (DK-MTP-1-P). Functions in the methionine salvage pathway. May play a role in apoptosis. The polypeptide is Methylthioribulose-1-phosphate dehydratase (Aquarana catesbeiana (American bullfrog)).